Consider the following 569-residue polypeptide: Ferredoxin--nitrite reductase, chloroplastic (569 aa).

The N-terminal 4 residues, 1–4 (IPGR), are a transit peptide targeting the chloroplast. The tract at residues 1–28 (IPGRTGRARAAVSVPPPAGEQVPTERLE) is disordered. [4Fe-4S] cluster is bound by residues C447, C453, C488, and C492. C492 contributes to the siroheme binding site.

Belongs to the nitrite and sulfite reductase 4Fe-4S domain family. As to quaternary structure, monomer. The cofactor is siroheme. It depends on [4Fe-4S] cluster as a cofactor.

The protein resides in the plastid. It is found in the chloroplast. It catalyses the reaction 6 oxidized [2Fe-2S]-[ferredoxin] + NH4(+) + 2 H2O = nitrite + 6 reduced [2Fe-2S]-[ferredoxin] + 8 H(+). It functions in the pathway nitrogen metabolism; nitrate reduction (assimilation). This Zea mays (Maize) protein is Ferredoxin--nitrite reductase, chloroplastic (NIR).